Reading from the N-terminus, the 130-residue chain is Small ribosomal subunit protein uS9 (130 aa).

The protein belongs to the universal ribosomal protein uS9 family.

The sequence is that of Small ribosomal subunit protein uS9 from Leptothrix cholodnii (strain ATCC 51168 / LMG 8142 / SP-6) (Leptothrix discophora (strain SP-6)).